We begin with the raw amino-acid sequence, 1423 residues long: uncharacterized protein (1423 aa).

The first 28 residues, Met1 to Ser28, serve as a signal peptide directing secretion. Residues Ala29–Thr1321 are Extracellular-facing. Residues Asn94, Asn306, Asn355, Asn483, Asn666, and Asn903 are each glycosylated (N-linked (GlcNAc...) asparagine). The NIDO domain occupies Ser184 to Val347. Residues Val638–Arg818 enclose the AMOP domain. The helical transmembrane segment at Trp1322 to Cys1342 threads the bilayer. The Cytoplasmic segment spans residues Cys1343 to Val1423. The segment at Ser1364–Tyr1401 is disordered. The span at Pro1378 to Tyr1401 shows a compositional bias: basic and acidic residues.

The protein localises to the membrane. This is an uncharacterized protein from Caenorhabditis elegans.